We begin with the raw amino-acid sequence, 608 residues long: Alpha-glycerophosphate oxidase (608 aa).

Residue 21–49 (DLLIIGGGITGAGVALQAAASGLETGLIE) coordinates FAD. The segment at 393 to 418 (SAVSKLESSTSEKHLDPSAVSRGSSL) is disordered.

The protein belongs to the FAD-dependent glycerol-3-phosphate dehydrogenase family. It depends on FAD as a cofactor.

Its subcellular location is the cell membrane. It catalyses the reaction sn-glycerol 3-phosphate + O2 = dihydroxyacetone phosphate + H2O2. Its pathway is membrane lipid metabolism; glycerophospholipid metabolism. This Streptococcus pneumoniae serotype 4 (strain ATCC BAA-334 / TIGR4) protein is Alpha-glycerophosphate oxidase (glpO).